Consider the following 503-residue polypeptide: Probable cytochrome P450 6a19 (503 aa).

Cys445 contributes to the heme binding site.

Belongs to the cytochrome P450 family. The cofactor is heme.

It localises to the endoplasmic reticulum membrane. It is found in the microsome membrane. Functionally, may be involved in the metabolism of insect hormones and in the breakdown of synthetic insecticides. This is Probable cytochrome P450 6a19 (Cyp6a19) from Drosophila melanogaster (Fruit fly).